The chain runs to 148 residues: Endothelial differentiation-related factor 1 homolog (148 aa).

Positions 1 to 26 are disordered; the sequence is MAESDWDTVTVLRKKGPSAAQAKSKQ. The region spanning 81–135 is the HTH cro/C1-type domain; sequence IQQGRQSKGMTQKDLATKINEKPQVIADYESGRAIPNNQVMGKIERAIGLKLRGK. Residues 92-111 constitute a DNA-binding region (H-T-H motif); it reads QKDLATKINEKPQVIADYES.

It is found in the nucleus. Its function is as follows. Probable transcriptional coactivator. The polypeptide is Endothelial differentiation-related factor 1 homolog (EDF1) (Gallus gallus (Chicken)).